The following is a 128-amino-acid chain: Glycine cleavage system H protein (128 aa).

The 83-residue stretch at 24–106 (VATVGITAFA…YNNGWLLKIK (83 aa)) folds into the Lipoyl-binding domain. Residue Lys65 is modified to N6-lipoyllysine.

Belongs to the GcvH family. In terms of assembly, the glycine cleavage system is composed of four proteins: P, T, L and H. Requires (R)-lipoate as cofactor.

Its function is as follows. The glycine cleavage system catalyzes the degradation of glycine. The H protein shuttles the methylamine group of glycine from the P protein to the T protein. The protein is Glycine cleavage system H protein of Acaryochloris marina (strain MBIC 11017).